The sequence spans 101 residues: MAKKSSVEKNNHRKDLVKRFAEKRKALLAIANDESREMEERFEARLKLAELPRNSSATRIRNRCEMTGRPRAYYRKLGISRVALRELGNRGLIPGLVKSSW.

It belongs to the universal ribosomal protein uS14 family. As to quaternary structure, part of the 30S ribosomal subunit. Contacts proteins S3 and S10.

Its function is as follows. Binds 16S rRNA, required for the assembly of 30S particles and may also be responsible for determining the conformation of the 16S rRNA at the A site. This Methylorubrum extorquens (strain PA1) (Methylobacterium extorquens) protein is Small ribosomal subunit protein uS14.